Reading from the N-terminus, the 511-residue chain is Maturase K (511 aa).

Belongs to the intron maturase 2 family. MatK subfamily.

The protein resides in the plastid. Its subcellular location is the chloroplast. Usually encoded in the trnK tRNA gene intron. Probably assists in splicing its own and other chloroplast group II introns. The protein is Maturase K of Bowiea volubilis (Climbing onion).